The following is an 81-amino-acid chain: Small ribosomal subunit protein bS16 (81 aa).

It belongs to the bacterial ribosomal protein bS16 family.

The sequence is that of Small ribosomal subunit protein bS16 from Nautilia profundicola (strain ATCC BAA-1463 / DSM 18972 / AmH).